Consider the following 320-residue polypeptide: uncharacterized protein (320 aa).

Residues 1 to 40 (MDHPSTSSLPRKKVKAGVKKAGKKTGKKTTGKKKTTPSAI) are disordered. A compositionally biased stretch (basic residues) spans 10–35 (PRKKVKAGVKKAGKKTGKKTTGKKKT). Residues 51–71 (LLVLLAVLSYLAALSLGLYIM) form a helical membrane-spanning segment. 4 N-linked (GlcNAc...) asparagine glycosylation sites follow: Asn92, Asn122, Asn154, and Asn167. The next 2 membrane-spanning stretches (helical) occupy residues 186 to 206 (PLVH…AMTG) and 216 to 236 (MLVT…VTVL). A glycan (N-linked (GlcNAc...) asparagine) is linked at Asn247. The helical transmembrane segment at 272–292 (VQGALVAIVAVFYLTMGVVFV) threads the bilayer.

The protein localises to the membrane. It participates in secondary metabolite biosynthesis; terpenoid biosynthesis. Its function is as follows. Part of the gene cluster that mediates the biosynthesis of an ophiobolin family sesterterpenoid. This is an uncharacterized protein from Aspergillus terreus.